The chain runs to 199 residues: Cytochrome c oxidase subunit 2 (199 aa).

A helical membrane pass occupies residues 1–13 (AICSLVLYLLSLM). Residues 14-26 (LMEKLSSNTVDAQ) are Mitochondrial matrix-facing. A helical transmembrane segment spans residues 27–54 (EVELIWTILPAIVLILLALPSLQILYMM). Over 55–199 (DEIDEPDLTL…SSLLSSSSSL (145 aa)) the chain is Mitochondrial intermembrane. 6 residues coordinate Cu cation: histidine 128, cysteine 163, glutamate 165, cysteine 167, histidine 171, and methionine 174. Glutamate 165 serves as a coordination point for Mg(2+).

It belongs to the cytochrome c oxidase subunit 2 family. In terms of assembly, component of the cytochrome c oxidase (complex IV, CIV), a multisubunit enzyme composed of 14 subunits. The complex is composed of a catalytic core of 3 subunits MT-CO1, MT-CO2 and MT-CO3, encoded in the mitochondrial DNA, and 11 supernumerary subunits COX4I, COX5A, COX5B, COX6A, COX6B, COX6C, COX7A, COX7B, COX7C, COX8 and NDUFA4, which are encoded in the nuclear genome. The complex exists as a monomer or a dimer and forms supercomplexes (SCs) in the inner mitochondrial membrane with NADH-ubiquinone oxidoreductase (complex I, CI) and ubiquinol-cytochrome c oxidoreductase (cytochrome b-c1 complex, complex III, CIII), resulting in different assemblies (supercomplex SCI(1)III(2)IV(1) and megacomplex MCI(2)III(2)IV(2)). Found in a complex with TMEM177, COA6, COX18, COX20, SCO1 and SCO2. Interacts with TMEM177 in a COX20-dependent manner. Interacts with COX20. Interacts with COX16. Cu cation is required as a cofactor.

The protein resides in the mitochondrion inner membrane. It carries out the reaction 4 Fe(II)-[cytochrome c] + O2 + 8 H(+)(in) = 4 Fe(III)-[cytochrome c] + 2 H2O + 4 H(+)(out). Component of the cytochrome c oxidase, the last enzyme in the mitochondrial electron transport chain which drives oxidative phosphorylation. The respiratory chain contains 3 multisubunit complexes succinate dehydrogenase (complex II, CII), ubiquinol-cytochrome c oxidoreductase (cytochrome b-c1 complex, complex III, CIII) and cytochrome c oxidase (complex IV, CIV), that cooperate to transfer electrons derived from NADH and succinate to molecular oxygen, creating an electrochemical gradient over the inner membrane that drives transmembrane transport and the ATP synthase. Cytochrome c oxidase is the component of the respiratory chain that catalyzes the reduction of oxygen to water. Electrons originating from reduced cytochrome c in the intermembrane space (IMS) are transferred via the dinuclear copper A center (CU(A)) of subunit 2 and heme A of subunit 1 to the active site in subunit 1, a binuclear center (BNC) formed by heme A3 and copper B (CU(B)). The BNC reduces molecular oxygen to 2 water molecules using 4 electrons from cytochrome c in the IMS and 4 protons from the mitochondrial matrix. This chain is Cytochrome c oxidase subunit 2 (MT-CO2), found in Rhea americana (Greater rhea).